The following is a 96-amino-acid chain: Large ribosomal subunit protein bL25 (96 aa).

The protein belongs to the bacterial ribosomal protein bL25 family. In terms of assembly, part of the 50S ribosomal subunit; part of the 5S rRNA/L5/L18/L25 subcomplex. Contacts the 5S rRNA. Binds to the 5S rRNA independently of L5 and L18.

Functionally, this is one of the proteins that binds to the 5S RNA in the ribosome where it forms part of the central protuberance. This chain is Large ribosomal subunit protein bL25, found in Francisella tularensis subsp. holarctica (strain FTNF002-00 / FTA).